Reading from the N-terminus, the 209-residue chain is Holliday junction branch migration complex subunit RuvA (209 aa).

Residues M1–A64 form a domain I region. A domain II region spans residues S65–Q143. The segment at P144–Q157 is flexible linker. Positions A158 to G209 are domain III.

Belongs to the RuvA family. As to quaternary structure, homotetramer. Forms an RuvA(8)-RuvB(12)-Holliday junction (HJ) complex. HJ DNA is sandwiched between 2 RuvA tetramers; dsDNA enters through RuvA and exits via RuvB. An RuvB hexamer assembles on each DNA strand where it exits the tetramer. Each RuvB hexamer is contacted by two RuvA subunits (via domain III) on 2 adjacent RuvB subunits; this complex drives branch migration. In the full resolvosome a probable DNA-RuvA(4)-RuvB(12)-RuvC(2) complex forms which resolves the HJ.

Its subcellular location is the cytoplasm. Functionally, the RuvA-RuvB-RuvC complex processes Holliday junction (HJ) DNA during genetic recombination and DNA repair, while the RuvA-RuvB complex plays an important role in the rescue of blocked DNA replication forks via replication fork reversal (RFR). RuvA specifically binds to HJ cruciform DNA, conferring on it an open structure. The RuvB hexamer acts as an ATP-dependent pump, pulling dsDNA into and through the RuvAB complex. HJ branch migration allows RuvC to scan DNA until it finds its consensus sequence, where it cleaves and resolves the cruciform DNA. The polypeptide is Holliday junction branch migration complex subunit RuvA (Marinobacter nauticus (strain ATCC 700491 / DSM 11845 / VT8) (Marinobacter aquaeolei)).